The following is a 369-amino-acid chain: MTQQYAIDTLLAQAGNRSDERTGAVSAPIFLSTAYGHCGIGESTGFDYTRTKNPTRTVLEETIAKLENGDRGFAFSSGMAAIQVLMTLFTAPDEWIVSSDVYGGTYRLLDFSYKNNNSVKPVYVNTASASAIEAAINPNTKAIFIETPSNPLMEECDVVEIAKLAKKHNLMLIVDNTFLTPVLSRPLDLGADVVIHSGTKYIAGHNDALVGLIVAKGQELCDRIAYIQNGAGAVLSPFDSWLTIRGMKTLSLRMKRHQENAQAIAEFLKAQPQVESVLYPNKGGMLSFRLQDEAWVNTFLKSIKLITFAESLGGTESFITYPATQTHMDIPESERVARGITNTLLRFSVGIEDVEDIKADLLQAFANLK.

Lys-200 is modified (N6-(pyridoxal phosphate)lysine).

This sequence belongs to the trans-sulfuration enzymes family. In terms of assembly, homotetramer. Pyridoxal 5'-phosphate serves as cofactor.

It localises to the cytoplasm. It carries out the reaction O-succinyl-L-homoserine + L-cysteine = L,L-cystathionine + succinate + H(+). Its function is as follows. Catalyzes the formation of L-cystathionine from O-succinyl-L-homoserine (OSHS) and L-cysteine, via a gamma-replacement reaction. In the absence of thiol, catalyzes gamma-elimination to form 2-oxobutanoate, succinate and ammonia. The sequence is that of Cystathionine gamma-synthase (metB) from Haemophilus influenzae (strain ATCC 51907 / DSM 11121 / KW20 / Rd).